A 303-amino-acid chain; its full sequence is Kanosamine kinase (303 aa).

This sequence belongs to the ROK (NagC/XylR) family.

The catalysed reaction is kanosamine + ATP = D-kanosamine 6-phosphate + ADP + H(+). The protein operates within antibiotic biosynthesis; rifamycin B biosynthesis. Its activity is regulated as follows. Inhibited by Zn(2+), Cu(2+), and Fe(2+). Involved in the biosynthesis of 3-amino-5-hydroxybenzoate (AHBA), a compound that then serves as the starter unit for the assembly of a polyketide during the biosynthesis of rifamycin B and other ansamycin antibiotics. Catalyzes only the phosphorylation of kanosamine to yield kanosamine 6-phosphate. The sequence is that of Kanosamine kinase (rifN) from Amycolatopsis mediterranei (strain S699) (Nocardia mediterranei).